The following is a 300-amino-acid chain: MKHGWLNIDKPYGVSSGSVVGKLKKMLQCKVGHAGTLDPLATGVLPIAFGEATKTTNYATDTLKSYEVTIQWGEQRDTDDKEGKIIRTSTLRPTEHSIKEALQQYVGVIQQIPSTFSAIKVGGMRAYSLSRMGKEVALAPRSVCITEIELLSVDSGSNTADLRITCGKGVYVRAVARDLGITLGCYGYVARLRRTMVGPFTEANIVTLQELETLVGENKLEEAVFPLSIVMSGLPHIEIDVETAKVVKNGRNIRLVDAALNGLYIVENCDMCYLSQAGGVPVAICEVVDGTAKPVRVFNV.

Asp38 functions as the Nucleophile in the catalytic mechanism.

Belongs to the pseudouridine synthase TruB family. Type 1 subfamily.

It catalyses the reaction uridine(55) in tRNA = pseudouridine(55) in tRNA. Functionally, responsible for synthesis of pseudouridine from uracil-55 in the psi GC loop of transfer RNAs. In Anaplasma phagocytophilum (strain HZ), this protein is tRNA pseudouridine synthase B.